A 219-amino-acid chain; its full sequence is GTP cyclohydrolase-2 (219 aa).

Position 51-55 (51-55 (RIHSE)) interacts with GTP. Residues Cys-56, Cys-67, and Cys-69 each coordinate Zn(2+). GTP contacts are provided by residues Gln-72, 94–96 (EGR), and Thr-116. The active-site Proton acceptor is Asp-128. The Nucleophile role is filled by Arg-130. GTP is bound by residues Thr-151 and Lys-156.

The protein belongs to the GTP cyclohydrolase II family. It depends on Zn(2+) as a cofactor.

It catalyses the reaction GTP + 4 H2O = 2,5-diamino-6-hydroxy-4-(5-phosphoribosylamino)-pyrimidine + formate + 2 phosphate + 3 H(+). It functions in the pathway cofactor biosynthesis; riboflavin biosynthesis; 5-amino-6-(D-ribitylamino)uracil from GTP: step 1/4. In terms of biological role, catalyzes the conversion of GTP to 2,5-diamino-6-ribosylamino-4(3H)-pyrimidinone 5'-phosphate (DARP), formate and pyrophosphate. The sequence is that of GTP cyclohydrolase-2 from Pasteurella multocida (strain Pm70).